A 226-amino-acid polypeptide reads, in one-letter code: 2-C-methyl-D-erythritol 4-phosphate cytidylyltransferase (226 aa).

It belongs to the IspD/TarI cytidylyltransferase family. IspD subfamily.

It catalyses the reaction 2-C-methyl-D-erythritol 4-phosphate + CTP + H(+) = 4-CDP-2-C-methyl-D-erythritol + diphosphate. It participates in isoprenoid biosynthesis; isopentenyl diphosphate biosynthesis via DXP pathway; isopentenyl diphosphate from 1-deoxy-D-xylulose 5-phosphate: step 2/6. Functionally, catalyzes the formation of 4-diphosphocytidyl-2-C-methyl-D-erythritol from CTP and 2-C-methyl-D-erythritol 4-phosphate (MEP). This chain is 2-C-methyl-D-erythritol 4-phosphate cytidylyltransferase, found in Prochlorococcus marinus (strain SARG / CCMP1375 / SS120).